The sequence spans 321 residues: MQCRLPRGLAGALLTLLCMGLLCLRYHLNLSPQRVQETPELRQPNPGPPELQLHDVFIAVKTTRAFHRLRLELLLDTWVSRTREQTFVFTDSPDKGLQERLGSHLVVTNCSAEHSHPALSCKMAAEFDTFLASGLRWFCHVDDDNYVNPRALLQLLRAFPLAHDVYVGRPSLNRPIHASEPQPHNRTRLVQFWFATGGAGFCINRRLALKMAPWASGSRFMDTSALIRLPDDCTMGYIIECKLGGRLQPSPLFHSHLETLQLLRTAQLPEQVTLSYGVFEGKLNVIKLQGPFSPEEDPSRFRSLHCLLYPDTPWCPQLGAR.

The Cytoplasmic segment spans residues 1–7 (MQCRLPR). Residues 8 to 27 (GLAGALLTLLCMGLLCLRYH) form a helical; Signal-anchor for type II membrane protein membrane-spanning segment. Residues 28 to 321 (LNLSPQRVQE…TPWCPQLGAR (294 aa)) lie on the Lumenal side of the membrane. A substrate-binding site is contributed by Arg-70. A glycan (N-linked (GlcNAc...) asparagine) is linked at Asn-109. Cystine bridges form between Cys-110/Cys-121 and Cys-139/Cys-202. Asp-143 lines the substrate pocket. A Mn(2+)-binding site is contributed by Asp-144. N-linked (GlcNAc...) asparagine glycosylation is present at Asn-185. The active site involves Asp-232. His-256 contributes to the Mn(2+) binding site. Cys-306 and Cys-315 form a disulfide bridge.

This sequence belongs to the glycosyltransferase 31 family. Mn(2+) is required as a cofactor.

The protein localises to the golgi apparatus membrane. The enzyme catalyses 3-O-(alpha-L-fucosyl)-L-threonyl-[EGF-like domain protein] + UDP-N-acetyl-alpha-D-glucosamine = 3-O-(N-acetyl-beta-D-glucosaminyl-(1-&gt;3)-alpha-L-fucosyl)-L-threonyl-[EGF-like domain protein] + UDP + H(+). It carries out the reaction 3-O-(alpha-L-fucosyl)-L-seryl-[EGF-like domain protein] + UDP-N-acetyl-alpha-D-glucosamine = 3-O-(N-acetyl-beta-D-glucosaminyl-(1-&gt;3)-alpha-L-fucosyl)-L-seryl-[EGF-like domain protein] + UDP + H(+). Its function is as follows. Glycosyltransferase that initiates the elongation of O-linked fucose residues attached to EGF-like repeats in the extracellular domain of Notch molecules. Modulates NOTCH1 activity by modifying O-fucose residues at specific EGF-like domains resulting in inhibition of NOTCH1 activation by JAG1 and enhancement of NOTCH1 activation by DLL1 via an increase in its binding to DLL1. The sequence is that of Beta-1,3-N-acetylglucosaminyltransferase manic fringe (MFNG) from Pan troglodytes (Chimpanzee).